We begin with the raw amino-acid sequence, 502 residues long: Aspartyl/glutamyl-tRNA(Asn/Gln) amidotransferase subunit B (502 aa).

It belongs to the GatB/GatE family. GatB subfamily. In terms of assembly, heterotrimer of A, B and C subunits.

The enzyme catalyses L-glutamyl-tRNA(Gln) + L-glutamine + ATP + H2O = L-glutaminyl-tRNA(Gln) + L-glutamate + ADP + phosphate + H(+). The catalysed reaction is L-aspartyl-tRNA(Asn) + L-glutamine + ATP + H2O = L-asparaginyl-tRNA(Asn) + L-glutamate + ADP + phosphate + 2 H(+). Its function is as follows. Allows the formation of correctly charged Asn-tRNA(Asn) or Gln-tRNA(Gln) through the transamidation of misacylated Asp-tRNA(Asn) or Glu-tRNA(Gln) in organisms which lack either or both of asparaginyl-tRNA or glutaminyl-tRNA synthetases. The reaction takes place in the presence of glutamine and ATP through an activated phospho-Asp-tRNA(Asn) or phospho-Glu-tRNA(Gln). This is Aspartyl/glutamyl-tRNA(Asn/Gln) amidotransferase subunit B from Ruegeria sp. (strain TM1040) (Silicibacter sp.).